Here is a 152-residue protein sequence, read N- to C-terminus: 2-C-methyl-D-erythritol 2,4-cyclodiphosphate synthase (152 aa).

A divalent metal cation contacts are provided by Asp8 and His10. 4-CDP-2-C-methyl-D-erythritol 2-phosphate-binding positions include 8-10 (DSH) and 34-35 (HS). His42 provides a ligand contact to a divalent metal cation. 4-CDP-2-C-methyl-D-erythritol 2-phosphate contacts are provided by residues 56–58 (DIG) and 61–65 (FPDTD).

Belongs to the IspF family. As to quaternary structure, homotrimer. A divalent metal cation is required as a cofactor.

It catalyses the reaction 4-CDP-2-C-methyl-D-erythritol 2-phosphate = 2-C-methyl-D-erythritol 2,4-cyclic diphosphate + CMP. It participates in isoprenoid biosynthesis; isopentenyl diphosphate biosynthesis via DXP pathway; isopentenyl diphosphate from 1-deoxy-D-xylulose 5-phosphate: step 4/6. Functionally, involved in the biosynthesis of isopentenyl diphosphate (IPP) and dimethylallyl diphosphate (DMAPP), two major building blocks of isoprenoid compounds. Catalyzes the conversion of 4-diphosphocytidyl-2-C-methyl-D-erythritol 2-phosphate (CDP-ME2P) to 2-C-methyl-D-erythritol 2,4-cyclodiphosphate (ME-CPP) with a corresponding release of cytidine 5-monophosphate (CMP). The polypeptide is 2-C-methyl-D-erythritol 2,4-cyclodiphosphate synthase (Thermus thermophilus (strain ATCC BAA-163 / DSM 7039 / HB27)).